A 350-amino-acid polypeptide reads, in one-letter code: Nicotinate-nucleotide--dimethylbenzimidazole phosphoribosyltransferase (350 aa).

Catalysis depends on E317, which acts as the Proton acceptor.

This sequence belongs to the CobT family.

It catalyses the reaction 5,6-dimethylbenzimidazole + nicotinate beta-D-ribonucleotide = alpha-ribazole 5'-phosphate + nicotinate + H(+). It participates in nucleoside biosynthesis; alpha-ribazole biosynthesis; alpha-ribazole from 5,6-dimethylbenzimidazole: step 1/2. In terms of biological role, catalyzes the synthesis of alpha-ribazole-5'-phosphate from nicotinate mononucleotide (NAMN) and 5,6-dimethylbenzimidazole (DMB). This chain is Nicotinate-nucleotide--dimethylbenzimidazole phosphoribosyltransferase, found in Shewanella sp. (strain MR-4).